The sequence spans 396 residues: Phosphoglycerate kinase (396 aa).

Residues 22-24 (DLN), arginine 37, 60-63 (HFGR), arginine 118, and arginine 151 contribute to the substrate site. Residues lysine 201, glutamate 323, and 353 to 356 (GGDT) each bind ATP.

Belongs to the phosphoglycerate kinase family. As to quaternary structure, monomer.

The protein resides in the cytoplasm. It catalyses the reaction (2R)-3-phosphoglycerate + ATP = (2R)-3-phospho-glyceroyl phosphate + ADP. It functions in the pathway carbohydrate degradation; glycolysis; pyruvate from D-glyceraldehyde 3-phosphate: step 2/5. The sequence is that of Phosphoglycerate kinase from Xanthobacter autotrophicus (strain ATCC BAA-1158 / Py2).